The sequence spans 340 residues: Probable rRNA-processing protein EBP2 homolog (340 aa).

Positions Met-1–Lys-10 are enriched in basic residues. 2 disordered regions span residues Met-1–Glu-59 and His-245–Arg-340. 2 stretches are compositionally biased toward acidic residues: residues Pro-23–Ala-37 and Met-46–Glu-59. The stretch at Gln-206 to His-245 forms a coiled coil. 2 stretches are compositionally biased toward gly residues: residues Gly-264–Gly-277 and Pro-318–Gly-333.

The protein belongs to the EBP2 family.

It localises to the nucleus. Its subcellular location is the nucleolus. Functionally, required for the processing of the 27S pre-rRNA. The polypeptide is Probable rRNA-processing protein EBP2 homolog (Caenorhabditis elegans).